A 324-amino-acid chain; its full sequence is UDP-N-acetylenolpyruvoylglucosamine reductase (324 aa).

The FAD-binding PCMH-type domain maps to 36-211 (FRAGGLAELM…AEDKAKIRND (176 aa)). The active site involves R183. Residue S232 is the Proton donor of the active site. E302 is a catalytic residue.

This sequence belongs to the MurB family. FAD is required as a cofactor.

It localises to the cytoplasm. The catalysed reaction is UDP-N-acetyl-alpha-D-muramate + NADP(+) = UDP-N-acetyl-3-O-(1-carboxyvinyl)-alpha-D-glucosamine + NADPH + H(+). The protein operates within cell wall biogenesis; peptidoglycan biosynthesis. Its function is as follows. Cell wall formation. The chain is UDP-N-acetylenolpyruvoylglucosamine reductase from Sinorhizobium medicae (strain WSM419) (Ensifer medicae).